A 97-amino-acid polypeptide reads, in one-letter code: Lipolysis-activating peptide 1-alpha chain (97 aa).

The N-terminal stretch at 1–21 (MNIMLFCSVFILVSLTGLSVS) is a signal peptide. Residues 25–88 (PGNYPMSLYG…FWAAHKNHCK (64 aa)) form the LCN-type CS-alpha/beta domain. Disulfide bonds link Cys-39–Cys-62, Cys-48–Cys-67, and Cys-52–Cys-69.

Belongs to the long (3 C-C) scorpion toxin superfamily. In terms of assembly, monomer (edited version) and heterodimer (non-edited version) of this alpha chain and a beta chain (AC P0CI43). Expressed by the venom gland.

It localises to the secreted. The heterodimer non-edited LVP1 induces lipolysis in rat adipocytes. Induction of lipolysis by LVP1 appears to be mediated through the beta-2 adrenergic receptor pathway (ADRB2). Functionally, the edited BmKBTx-like, similar to beta-toxins, may modulate voltage-gated sodium channels (Nav) and may block voltage-gated potassium channels (Kv). This Lychas mucronatus (Chinese swimming scorpion) protein is Lipolysis-activating peptide 1-alpha chain.